We begin with the raw amino-acid sequence, 590 residues long: G protein-coupled receptor kinase 5 (590 aa).

The interval 1 to 185 is N-terminal; sequence MELENIVANT…LERQPVTKNT (185 aa). Positions 20–39 are interaction with calmodulin; the sequence is GGKRKGKSKKWKEILKFPHI. The region spanning 53 to 171 is the RGS domain; the sequence is YCSLCDKQPI…LDSMFFDRFL (119 aa). The region spanning 186 to 448 is the Protein kinase domain; the sequence is FRQYRVLGKG…AAEVKRHPFF (263 aa). Residues 192–200 and lysine 215 contribute to the ATP site; that span reads LGKGGFGEV. Aspartate 311 functions as the Proton acceptor in the catalytic mechanism. Positions 388-395 match the Nuclear localization signal motif; that stretch reads RKEKVKRE. The AGC-kinase C-terminal domain occupies 449 to 514; it reads RNMNFKRLEA…GSVSIPWQNE (66 aa). At serine 484 the chain carries Phosphoserine; by autocatalysis. Threonine 485 is subject to Phosphothreonine; by autocatalysis. The interval 531–590 is disordered; that stretch reads GTLPPDLNRNHPPEPPKKGLLQRLFKRQHQNNSKSSPSSKTSFNHHINSNHVSSNSTGSS. Residues 538–547 show a composition bias toward basic and acidic residues; it reads NRNHPPEPPK. Positions 546–565 are sufficient for membrane localization; it reads PKKGLLQRLFKRQHQNNSKS. Low complexity predominate over residues 563–590; that stretch reads SKSSPSSKTSFNHHINSNHVSSNSTGSS. A Phosphoserine modification is found at serine 579.

It belongs to the protein kinase superfamily. AGC Ser/Thr protein kinase family. GPRK subfamily. Interacts with ST13 (via the C-terminus 303-319 AA). Interacts with TP53/p53. Interacts with HTR4 (via C-terminus 330-346 AA); this interaction is promoted by 5-HT (serotonin). Interacts with HDAC5. Interacts with GIT1. Post-translationally, autophosphorylated. Autophosphorylation may play a critical role in the regulation of GRK5 kinase activity. In terms of tissue distribution, highest levels in heart, placenta, lung &gt; skeletal muscle &gt; brain, liver, pancreas &gt; kidney.

The protein resides in the cytoplasm. It localises to the nucleus. Its subcellular location is the cell membrane. The enzyme catalyses [G-protein-coupled receptor] + ATP = [G-protein-coupled receptor]-phosphate + ADP + H(+). Its activity is regulated as follows. Inhibited by calmodulin with an IC(50) of 50 nM. Calmodulin inhibits GRK5 association with receptor and phospholipid. Its function is as follows. Serine/threonine kinase that phosphorylates preferentially the activated forms of a variety of G-protein-coupled receptors (GPCRs). Such receptor phosphorylation initiates beta-arrestin-mediated receptor desensitization, internalization, and signaling events leading to their down-regulation. Phosphorylates a variety of GPCRs, including adrenergic receptors, muscarinic acetylcholine receptors (more specifically Gi-coupled M2/M4 subtypes), dopamine receptors and opioid receptors. In addition to GPCRs, also phosphorylates various substrates: Hsc70-interacting protein/ST13, TP53/p53, HDAC5, and arrestin-1/ARRB1. Phosphorylation of ARRB1 by GRK5 inhibits G-protein independent MAPK1/MAPK3 signaling downstream of 5HT4-receptors. Phosphorylation of HDAC5, a repressor of myocyte enhancer factor 2 (MEF2) leading to nuclear export of HDAC5 and allowing MEF2-mediated transcription. Phosphorylation of TP53/p53, a crucial tumor suppressor, inhibits TP53/p53-mediated apoptosis. Phosphorylation of ST13 regulates internalization of the chemokine receptor. Phosphorylates rhodopsin (RHO) (in vitro) and a non G-protein-coupled receptor, LRP6 during Wnt signaling (in vitro). This is G protein-coupled receptor kinase 5 (GRK5) from Homo sapiens (Human).